Consider the following 232-residue polypeptide: 7-cyano-7-deazaguanine synthase (232 aa).

7 to 17 (LSGGLDSTVVT) provides a ligand contact to ATP. Zn(2+)-binding residues include Cys-195, Cys-206, Cys-209, and Cys-212.

This sequence belongs to the QueC family. The cofactor is Zn(2+).

It catalyses the reaction 7-carboxy-7-deazaguanine + NH4(+) + ATP = 7-cyano-7-deazaguanine + ADP + phosphate + H2O + H(+). It functions in the pathway purine metabolism; 7-cyano-7-deazaguanine biosynthesis. Catalyzes the ATP-dependent conversion of 7-carboxy-7-deazaguanine (CDG) to 7-cyano-7-deazaguanine (preQ(0)). The protein is 7-cyano-7-deazaguanine synthase of Methanocaldococcus jannaschii (strain ATCC 43067 / DSM 2661 / JAL-1 / JCM 10045 / NBRC 100440) (Methanococcus jannaschii).